Consider the following 937-residue polypeptide: Coiled-coil domain-containing protein 39 (937 aa).

4 coiled-coil regions span residues 16–137, 165–339, 365–615, and 664–816; these read AIPV…CQMN, QQDD…KKDI, EKTL…SQIR, and VIKA…LKQT. The disordered stretch occupies residues 866-937; the sequence is LPTARGPSSR…NIPKEKKLSK (72 aa). Residues 873-887 show a composition bias toward low complexity; it reads SSRSSSQSSSLSSFR. Phosphoserine is present on residues serine 888 and serine 896. Positions 915-928 are enriched in low complexity; that stretch reads NDSSRSASSGSNSN.

It belongs to the CCDC39 family. Strongly expressed in tissues rich in ciliated cells. Expressed in olfactory and vomeronasal sensory neurons and the respiratory epithelium. Expressed in node cells carrying motile cilia, in upper and lower airways, and in ependymal and choroid plexus cells.

It localises to the cytoplasm. It is found in the cytoskeleton. Its subcellular location is the cilium axoneme. Its function is as follows. Required for assembly of dynein regulatory complex (DRC) and inner dynein arm (IDA) complexes, which are responsible for ciliary beat regulation, thereby playing a central role in motility in cilia and flagella. Probably acts together with CCDC40 to form a molecular ruler that determines the 96 nanometer (nm) repeat length and arrangements of components in cilia and flagella. Not required for outer dynein arm complexes assembly. The sequence is that of Coiled-coil domain-containing protein 39 from Mus musculus (Mouse).